The primary structure comprises 44 residues: U4-ctenitoxin-Co1a (44 aa).

4 disulfide bridges follow: C2/C19, C9/C25, C18/C39, and C27/C37.

In terms of tissue distribution, expressed by the venom gland.

It is found in the secreted. Its function is as follows. Omega-agatoxins are antagonists of voltage-gated calcium channels (Cav). Toxic to mice by intracerebroventricular injection. The polypeptide is U4-ctenitoxin-Co1a (Ctenus ornatus (Brazilian spider)).